The primary structure comprises 63 residues: Small ribosomal subunit protein eS17 (63 aa).

The protein belongs to the eukaryotic ribosomal protein eS17 family.

The chain is Small ribosomal subunit protein eS17 from Methanococcus aeolicus (strain ATCC BAA-1280 / DSM 17508 / OCM 812 / Nankai-3).